We begin with the raw amino-acid sequence, 435 residues long: Gamma-glutamyl phosphate reductase (435 aa).

It belongs to the gamma-glutamyl phosphate reductase family.

It is found in the cytoplasm. The enzyme catalyses L-glutamate 5-semialdehyde + phosphate + NADP(+) = L-glutamyl 5-phosphate + NADPH + H(+). It participates in amino-acid biosynthesis; L-proline biosynthesis; L-glutamate 5-semialdehyde from L-glutamate: step 2/2. Its function is as follows. Catalyzes the NADPH-dependent reduction of L-glutamate 5-phosphate into L-glutamate 5-semialdehyde and phosphate. The product spontaneously undergoes cyclization to form 1-pyrroline-5-carboxylate. The protein is Gamma-glutamyl phosphate reductase of Xylella fastidiosa (strain M12).